A 462-amino-acid polypeptide reads, in one-letter code: Tubulin alpha-4 chain (462 aa).

GTP contacts are provided by Gln11, Glu82, Ser151, Gly155, Thr156, Thr190, Asn217, and Asn239. Glu82 serves as a coordination point for Mg(2+). The active site involves Glu265.

Belongs to the tubulin family. In terms of assembly, dimer of alpha and beta chains. A typical microtubule is a hollow water-filled tube with an outer diameter of 25 nm and an inner diameter of 15 nM. Alpha-beta heterodimers associate head-to-tail to form protofilaments running lengthwise along the microtubule wall with the beta-tubulin subunit facing the microtubule plus end conferring a structural polarity. Microtubules usually have 13 protofilaments but different protofilament numbers can be found in some organisms and specialized cells. It depends on Mg(2+) as a cofactor.

The protein resides in the cytoplasm. It localises to the cytoskeleton. The catalysed reaction is GTP + H2O = GDP + phosphate + H(+). Tubulin is the major constituent of microtubules, a cylinder consisting of laterally associated linear protofilaments composed of alpha- and beta-tubulin heterodimers. Microtubules grow by the addition of GTP-tubulin dimers to the microtubule end, where a stabilizing cap forms. Below the cap, tubulin dimers are in GDP-bound state, owing to GTPase activity of alpha-tubulin. This is Tubulin alpha-4 chain (alphaTub67C) from Drosophila melanogaster (Fruit fly).